The following is a 232-amino-acid chain: Ribonuclease P protein component 3 (232 aa).

It belongs to the eukaryotic/archaeal RNase P protein component 3 family. Consists of a catalytic RNA component and at least 4-5 protein subunits.

The protein resides in the cytoplasm. The catalysed reaction is Endonucleolytic cleavage of RNA, removing 5'-extranucleotides from tRNA precursor.. Functionally, part of ribonuclease P, a protein complex that generates mature tRNA molecules by cleaving their 5'-ends. The polypeptide is Ribonuclease P protein component 3 (Halobacterium salinarum (strain ATCC 29341 / DSM 671 / R1)).